Here is a 298-residue protein sequence, read N- to C-terminus: ATP phosphoribosyltransferase (298 aa).

The protein belongs to the ATP phosphoribosyltransferase family. Long subfamily. Requires Mg(2+) as cofactor.

Its subcellular location is the cytoplasm. The enzyme catalyses 1-(5-phospho-beta-D-ribosyl)-ATP + diphosphate = 5-phospho-alpha-D-ribose 1-diphosphate + ATP. Its pathway is amino-acid biosynthesis; L-histidine biosynthesis; L-histidine from 5-phospho-alpha-D-ribose 1-diphosphate: step 1/9. Feedback inhibited by histidine. Functionally, catalyzes the condensation of ATP and 5-phosphoribose 1-diphosphate to form N'-(5'-phosphoribosyl)-ATP (PR-ATP). Has a crucial role in the pathway because the rate of histidine biosynthesis seems to be controlled primarily by regulation of HisG enzymatic activity. This Psychromonas ingrahamii (strain DSM 17664 / CCUG 51855 / 37) protein is ATP phosphoribosyltransferase.